Consider the following 677-residue polypeptide: DNA-directed RNA polymerase subunit beta' (677 aa).

Zn(2+)-binding residues include C69, C71, C87, and C90. Residues D489, D491, and D493 each coordinate Mg(2+).

The protein belongs to the RNA polymerase beta' chain family. RpoC1 subfamily. As to quaternary structure, in plastids the minimal PEP RNA polymerase catalytic core is composed of four subunits: alpha, beta, beta', and beta''. When a (nuclear-encoded) sigma factor is associated with the core the holoenzyme is formed, which can initiate transcription. Mg(2+) serves as cofactor. The cofactor is Zn(2+).

It localises to the plastid. The protein resides in the chloroplast. The catalysed reaction is RNA(n) + a ribonucleoside 5'-triphosphate = RNA(n+1) + diphosphate. In terms of biological role, DNA-dependent RNA polymerase catalyzes the transcription of DNA into RNA using the four ribonucleoside triphosphates as substrates. This chain is DNA-directed RNA polymerase subunit beta', found in Daucus carota (Wild carrot).